The following is a 425-amino-acid chain: Dihydroorotase (425 aa).

Positions 56 and 58 each coordinate Zn(2+). Substrate contacts are provided by residues H58–R60 and N90. Zn(2+)-binding residues include D148, H175, and H228. N274 is a substrate binding site. Zn(2+) is bound at residue D301. Residue D301 is part of the active site. Residues H305 and F319–G320 each bind substrate.

It belongs to the metallo-dependent hydrolases superfamily. DHOase family. Class I DHOase subfamily. Zn(2+) is required as a cofactor.

The enzyme catalyses (S)-dihydroorotate + H2O = N-carbamoyl-L-aspartate + H(+). It functions in the pathway pyrimidine metabolism; UMP biosynthesis via de novo pathway; (S)-dihydroorotate from bicarbonate: step 3/3. Its function is as follows. Catalyzes the reversible cyclization of carbamoyl aspartate to dihydroorotate. The chain is Dihydroorotase from Lactobacillus delbrueckii subsp. bulgaricus (strain ATCC 11842 / DSM 20081 / BCRC 10696 / JCM 1002 / NBRC 13953 / NCIMB 11778 / NCTC 12712 / WDCM 00102 / Lb 14).